The primary structure comprises 283 residues: Nucleotide-binding protein DR_1434 (283 aa).

ATP is bound at residue 8–15 (GLSGSGKS). 57–60 (DTRT) is a binding site for GTP.

This sequence belongs to the RapZ-like family.

Displays ATPase and GTPase activities. This is Nucleotide-binding protein DR_1434 from Deinococcus radiodurans (strain ATCC 13939 / DSM 20539 / JCM 16871 / CCUG 27074 / LMG 4051 / NBRC 15346 / NCIMB 9279 / VKM B-1422 / R1).